Here is a 171-residue protein sequence, read N- to C-terminus: Small ribosomal subunit protein uS4 (171 aa).

Positions 103-167 (RRLQTLVHKR…SPMKKQIEAA (65 aa)) constitute an S4 RNA-binding domain.

Belongs to the universal ribosomal protein uS4 family. In terms of assembly, part of the 30S ribosomal subunit. Contacts protein S5. The interaction surface between S4 and S5 is involved in control of translational fidelity.

In terms of biological role, one of the primary rRNA binding proteins, it binds directly to 16S rRNA where it nucleates assembly of the body of the 30S subunit. Functionally, with S5 and S12 plays an important role in translational accuracy. In Methanothermobacter thermautotrophicus (strain ATCC 29096 / DSM 1053 / JCM 10044 / NBRC 100330 / Delta H) (Methanobacterium thermoautotrophicum), this protein is Small ribosomal subunit protein uS4.